The primary structure comprises 377 residues: Queuine tRNA-ribosyltransferase (377 aa).

The active-site Proton acceptor is D89. Substrate contacts are provided by residues D89–F93, D143, Q187, and G214. Residues G245–D251 form an RNA binding region. The Nucleophile role is filled by D264. The RNA binding; important for wobble base 34 recognition stretch occupies residues T269–R273. 4 residues coordinate Zn(2+): C302, C304, C307, and H333.

The protein belongs to the queuine tRNA-ribosyltransferase family. As to quaternary structure, homodimer. Within each dimer, one monomer is responsible for RNA recognition and catalysis, while the other monomer binds to the replacement base PreQ1. It depends on Zn(2+) as a cofactor.

It carries out the reaction 7-aminomethyl-7-carbaguanine + guanosine(34) in tRNA = 7-aminomethyl-7-carbaguanosine(34) in tRNA + guanine. It functions in the pathway tRNA modification; tRNA-queuosine biosynthesis. In terms of biological role, catalyzes the base-exchange of a guanine (G) residue with the queuine precursor 7-aminomethyl-7-deazaguanine (PreQ1) at position 34 (anticodon wobble position) in tRNAs with GU(N) anticodons (tRNA-Asp, -Asn, -His and -Tyr). Catalysis occurs through a double-displacement mechanism. The nucleophile active site attacks the C1' of nucleotide 34 to detach the guanine base from the RNA, forming a covalent enzyme-RNA intermediate. The proton acceptor active site deprotonates the incoming PreQ1, allowing a nucleophilic attack on the C1' of the ribose to form the product. After dissociation, two additional enzymatic reactions on the tRNA convert PreQ1 to queuine (Q), resulting in the hypermodified nucleoside queuosine (7-(((4,5-cis-dihydroxy-2-cyclopenten-1-yl)amino)methyl)-7-deazaguanosine). In Shewanella sediminis (strain HAW-EB3), this protein is Queuine tRNA-ribosyltransferase.